A 1113-amino-acid chain; its full sequence is Sterol regulatory element binding protein sbp-1 (1113 aa).

Residues methionine 1–aspartate 52 form a transcriptional activation (acidic) region. Disordered regions lie at residues aspartate 24 to aspartate 68, leucine 101 to proline 132, serine 206 to asparagine 274, and glutamate 290 to threonine 345. Residues proline 229 to proline 238 show a composition bias toward basic residues. Acidic residues predominate over residues alanine 324 to serine 337. Positions glutamate 355–arginine 368 are basic motif. One can recognise a bHLH domain in the interval glutamate 355–valine 405. The tract at residues cysteine 369–valine 405 is helix-loop-helix motif. The stretch at leucine 395–threonine 422 forms a coiled coil. Residues threonine 437–arginine 472 form a disordered region. The next 2 membrane-spanning stretches (helical) occupy residues valine 478 to glycine 498 and methionine 541 to isoleucine 561.

Post-translationally, processed in the Golgi apparatus, releasing the protein from the membrane. Ubiquitinated; the nuclear form has a rapid turnover and is rapidly ubiquitinated and degraded by the proteasome in the nucleus. In terms of tissue distribution, broadly expressed, including many cells in the head. Expressed in the intestine.

The protein resides in the nucleus. The protein localises to the endoplasmic reticulum membrane. Transcription factor involved in maintaining normal fat levels. Regulates the expression of genes involved in lipid metabolism in response to nutrient availability, such as the fatty-acid desaturases fat-5, fat-6 and fat-7. In response to a high-glucose diet, promotes fatty acid synthesis, elongation and desaturation, acting in concert with transcription factor mxl-3. Plays a role in synthesis of monomethyl branched-chain fatty acids (mmBCFAs) as well as other very-long-chain fatty acids. Downstream of the cis-Golgi membrane protein eas-1/GOLT1B and the E3 ubiquitin ligase rnf-145/RNF145, plays a role in the regulation of glial size, perhaps by modulating synthesis of long-chain polyunsaturated fatty-acids (LC-PUFA). Modulates expression of genes in the one-carbon cycle, which produces the methyl donor S-adenosylmethionine (SAM). Probably involved in a feedback loop in which decreased levels of SAM lead to increased transcriptional activity of sbp-1, thereby causing lipid accumulation. Involved in the negative regulation of zinc homeostasis. Involved in the response to simulated microgravity, in concert with Mediator complex subunit mdt-15, probably acting in the intestine. Plays a role in transgenerational lipid accumulation in response to a high-fat diet, probably acting by upregulating wdr-5.1 expression to increase the level of trimethylated 'Lys-4' histone H3 (H3K4me3), which may then induce the expression of fat-5, fat-6 and fat-7. May act as an oxygen sensor for lipid metabolism. In terms of biological role, precursor of the transcription factor form, which is embedded in the endoplasmic reticulum membrane. Processing of this form allows release of the transcription factor form that translocates into the nucleus and activates transcription of genes involved in sterol biosynthesis and lipid homeostasis. Functionally, key transcription factor that regulates expression of genes involved in sterol biosynthesis and lipid homeostasis. This is Sterol regulatory element binding protein sbp-1 from Caenorhabditis elegans.